A 361-amino-acid chain; its full sequence is 5-formaminoimidazole-4-carboxamide-1-(beta)-D-ribofuranosyl 5'-monophosphate synthetase (361 aa).

Residues histidine 27 and serine 94 each coordinate 5-amino-1-(5-phospho-beta-D-ribosyl)imidazole-4-carboxamide. The ATP-grasp domain occupies 116-348 (RAILRWEAER…MGQRIAKEIK (233 aa)). ATP is bound by residues 146 to 208 (PDEI…ANYC) and glutamate 230. Asparagine 258 provides a ligand contact to 5-amino-1-(5-phospho-beta-D-ribosyl)imidazole-4-carboxamide. Mg(2+) contacts are provided by glutamine 297 and glutamate 310.

The protein belongs to the phosphohexose mutase family. Requires Mg(2+) as cofactor. It depends on Mn(2+) as a cofactor.

It catalyses the reaction 5-amino-1-(5-phospho-beta-D-ribosyl)imidazole-4-carboxamide + formate + ATP = 5-formamido-1-(5-phospho-D-ribosyl)imidazole-4-carboxamide + ADP + phosphate. It functions in the pathway purine metabolism; IMP biosynthesis via de novo pathway; 5-formamido-1-(5-phospho-D-ribosyl)imidazole-4-carboxamide from 5-amino-1-(5-phospho-D-ribosyl)imidazole-4-carboxamide (formate route): step 1/1. Catalyzes the ATP- and formate-dependent formylation of 5-aminoimidazole-4-carboxamide-1-beta-d-ribofuranosyl 5'-monophosphate (AICAR) to 5-formaminoimidazole-4-carboxamide-1-beta-d-ribofuranosyl 5'-monophosphate (FAICAR) in the absence of folates. The polypeptide is 5-formaminoimidazole-4-carboxamide-1-(beta)-D-ribofuranosyl 5'-monophosphate synthetase (Methanococcus maripaludis (strain DSM 14266 / JCM 13030 / NBRC 101832 / S2 / LL)).